The chain runs to 538 residues: Aldehyde dehydrogenase family 2 member B4, mitochondrial (538 aa).

Residues 1–38 (MAARRVSSLLSRSFSASSPLLFRSQGRNCYNGGILRRF) constitute a mitochondrion transit peptide. An NAD(+)-binding site is contributed by 282 to 287 (GSTDTG). Glutamate 305 functions as the Proton acceptor in the catalytic mechanism. The active-site Nucleophile is the cysteine 339.

Belongs to the aldehyde dehydrogenase family. Homotetramer.

It localises to the mitochondrion matrix. It carries out the reaction an aldehyde + NAD(+) + H2O = a carboxylate + NADH + 2 H(+). In terms of biological role, possesses activity on acetaldehyde and glycolaldehyde in vitro. This Arabidopsis thaliana (Mouse-ear cress) protein is Aldehyde dehydrogenase family 2 member B4, mitochondrial (ALDH2B4).